A 764-amino-acid chain; its full sequence is Zygote defective protein 12 (764 aa).

Positions Met1 to Ala20 are enriched in polar residues. Residues Met1–Arg33 form a disordered region. The tract at residues Met1–Gly236 is interaction with dli-1. The Calponin-homology (CH) domain maps to Arg43–Gln169. Coiled-coil stretches lie at residues Leu244 to Thr405 and Gly436 to Ile692. Residues Ala732–Ile752 form a helical membrane-spanning segment.

This sequence belongs to the hook family. In terms of assembly, homodimer. Interacts with the dynein subunit dli-1 via its N-terminus. May interact with microtubules.

The protein localises to the nucleus membrane. It localises to the cytoplasm. It is found in the cytoskeleton. The protein resides in the microtubule organizing center. Its subcellular location is the centrosome. In terms of biological role, cytoskeletal linker protein, which is essential for attachment of the centrosome to the nucleus. Required for dynein localization to the nuclear envelope. The protein is Zygote defective protein 12 (zyg-12) of Caenorhabditis briggsae.